Consider the following 154-residue polypeptide: MAARLCCQLDTARDVLCLRPVGAESRGRPLPGPLGALPPASPSAVPTDHGAHLSLRGLPVCAFSSTGPCALRFTSARRMETTVNAHRNLPKVLHKRTLGLSAMSTTDLEAYFKDCVFTEWEELGEEMRLKVFVLGGCRHKLVCSPAPCNFFTSA.

Residues 68–117 (PCALRFTSARRMETTVNAHRNLPKVLHKRTLGLSAMSTTDLEAYFKDCVF) form a mitochondrial targeting sequence region.

It belongs to the orthohepadnavirus protein X family. As to quaternary structure, may form homodimer. May interact with host CEBPA, CFLAR, CREB1, DDB1, E4F1, HBXIP, HSPD1/HSP60, NFKBIA, POLR2E and SMAD4. Interacts with host SMC5-SMC6 complex and induces its degradation. Interacts with host TRPC4AP; leading to prevent ubiquitination of TRPC4AP. Interacts with host PLSCR1; this interaction promotes ubiquitination and degradation of HBx and impairs HBx-mediated cell proliferation. Post-translationally, a fraction may be phosphorylated in insect cells and HepG2 cells, a human hepatoblastoma cell line. Phosphorylated in vitro by host protein kinase C or mitogen-activated protein kinase. N-acetylated in insect cells.

The protein localises to the host cytoplasm. It localises to the host nucleus. It is found in the host mitochondrion. Its function is as follows. Multifunctional protein that plays a role in silencing host antiviral defenses and promoting viral transcription. Does not seem to be essential for HBV infection. May be directly involved in development of cirrhosis and liver cancer (hepatocellular carcinoma). Most of cytosolic activities involve modulation of cytosolic calcium. The effect on apoptosis is controversial depending on the cell types in which the studies have been conducted. May induce apoptosis by localizing in mitochondria and causing loss of mitochondrial membrane potential. May also modulate apoptosis by binding host CFLAR, a key regulator of the death-inducing signaling complex (DISC). Promotes viral transcription by using the host E3 ubiquitin ligase DDB1 to target the SMC5-SMC6 complex to proteasomal degradation. This host complex would otherwise bind to viral episomal DNA, and prevents its transcription. Moderately stimulates transcription of many different viral and cellular transcription elements. Promoters and enhancers stimulated by HBx contain DNA binding sites for NF-kappa-B, AP-1, AP-2, c-EBP, ATF/CREB, or the calcium-activated factor NF-AT. The polypeptide is Protein X (Homo sapiens (Human)).